We begin with the raw amino-acid sequence, 248 residues long: Putative TrmH family tRNA/rRNA methyltransferase (248 aa).

3 residues coordinate S-adenosyl-L-methionine: G196, I216, and L225.

It belongs to the class IV-like SAM-binding methyltransferase superfamily. RNA methyltransferase TrmH family.

The chain is Putative TrmH family tRNA/rRNA methyltransferase from Staphylococcus aureus (strain Mu50 / ATCC 700699).